We begin with the raw amino-acid sequence, 349 residues long: Isopentenyl-diphosphate delta-isomerase (349 aa).

8 to 9 provides a ligand contact to substrate; it reads RK. FMN is bound by residues serine 66, 67-69, serine 97, and asparagine 125; that span reads SMT. Residue 97-99 participates in substrate binding; sequence STR. Glutamine 160 contributes to the substrate binding site. Glutamate 161 contributes to the Mg(2+) binding site. Residues lysine 192, threonine 222, 272 to 274, and 293 to 294 each bind FMN; these read GMK and AR.

The protein belongs to the IPP isomerase type 2 family. Homooctamer. Dimer of tetramers. The cofactor is FMN. Requires NADPH as cofactor. Mg(2+) is required as a cofactor.

Its subcellular location is the cytoplasm. The catalysed reaction is isopentenyl diphosphate = dimethylallyl diphosphate. Functionally, involved in the biosynthesis of isoprenoids. Catalyzes the 1,3-allylic rearrangement of the homoallylic substrate isopentenyl (IPP) to its allylic isomer, dimethylallyl diphosphate (DMAPP). In Oceanobacillus iheyensis (strain DSM 14371 / CIP 107618 / JCM 11309 / KCTC 3954 / HTE831), this protein is Isopentenyl-diphosphate delta-isomerase.